A 444-amino-acid chain; its full sequence is Acyl-CoA (8-3)-desaturase (444 aa).

Met1 bears the N-acetylmethionine mark. Residues 1–121 are Cytoplasmic-facing; it reads MAPDPVAAKT…FRELRATVEQ (121 aa). The region spanning 17–94 is the Cytochrome b5 heme-binding domain; the sequence is PRYFTWDEVA…MNSLLIGELS (78 aa). Residues 122–142 traverse the membrane as a helical segment; the sequence is MGLMKANHVFFLLYLLHILLL. Residues 143–146 lie on the Lumenal side of the membrane; that stretch reads DGAA. Residues 147-167 traverse the membrane as a helical segment; that stretch reads WLTLWIFGTSFLPFLLCAVLL. Topologically, residues 168 to 267 are cytoplasmic; that stretch reads TAAQIQAGWL…PYNHQHKYFF (100 aa). Positions 179 to 183 match the Histidine box-1 motif; the sequence is HDLGH. The Histidine box-2 signature appears at 216–220; that stretch reads HFQHH. A helical membrane pass occupies residues 268-288; sequence LIGPPALVPFFFQWYVFYFVI. Residues 289 to 305 lie on the Lumenal side of the membrane; that stretch reads QRKKWVDLAWMITFYIR. Residues 306-326 traverse the membrane as a helical segment; it reads LLLTYVPLLGLKAFLGLYFIV. Residues 327–444 lie on the Cytoplasmic side of the membrane; it reads RFLESNWFVW…QLWLDAYLHQ (118 aa). The Histidine box-3 signature appears at 382–386; the sequence is QIEHH.

Belongs to the fatty acid desaturase type 1 family. Widely expressed. Expressed in brain, liver and thymus (at protein level). Isoform 1 seems to be more abundant than isoform 2. Expression of isoform 2 is very low in spleen and not detectable in skeletal muscle.

Its subcellular location is the endoplasmic reticulum membrane. The protein localises to the mitochondrion. The enzyme catalyses (8Z,11Z,14Z)-eicosatrienoyl-CoA + 2 Fe(II)-[cytochrome b5] + O2 + 2 H(+) = (5Z,8Z,11Z,14Z)-eicosatetraenoyl-CoA + 2 Fe(III)-[cytochrome b5] + 2 H2O. The catalysed reaction is (8Z,11Z,14Z,17Z)-eicosatetraenoyl-CoA + 2 Fe(II)-[cytochrome b5] + O2 + 2 H(+) = (5Z,8Z,11Z,14Z,17Z)-eicosapentaenoyl-CoA + 2 Fe(III)-[cytochrome b5] + 2 H2O. It catalyses the reaction (11E)-octadecenoyl-CoA + 2 Fe(II)-[cytochrome b5] + O2 + 2 H(+) = (5Z,11E)-octadecadienoyl-CoA + 2 Fe(III)-[cytochrome b5] + 2 H2O. It functions in the pathway lipid metabolism; polyunsaturated fatty acid biosynthesis. In terms of biological role, acts as a front-end fatty acyl-coenzyme A (CoA) desaturase that introduces a cis double bond at carbon 5 located between a preexisting double bond and the carboxyl end of the fatty acyl chain. Involved in biosynthesis of highly unsaturated fatty acids (HUFA) from the essential polyunsaturated fatty acids (PUFA) linoleic acid (LA) (18:2n-6) and alpha-linolenic acid (ALA) (18:3n-3) precursors. Specifically, desaturates dihomo-gamma-linoleoate (DGLA) (20:3n-6) and eicosatetraenoate (ETA) (20:4n-3) to generate arachidonate (AA) (20:4n-6) and eicosapentaenoate (EPA) (20:5n-3), respectively. As a rate limiting enzyme for DGLA (20:3n-6) and AA (20:4n-6)-derived eicosanoid biosynthesis, controls the metabolism of inflammatory lipids like prostaglandin E2, critical for efficient acute inflammatory response and maintenance of epithelium homeostasis. Contributes to membrane phospholipid biosynthesis by providing AA (20:4n-6) as a major acyl chain esterified into phospholipids. In particular, regulates phosphatidylinositol-4,5-bisphosphate levels, modulating inflammatory cytokine production in T-cells. Also desaturates (11E)-octadecenoate (trans-vaccenoate)(18:1n-9), a metabolite in the biohydrogenation pathway of LA (18:2n-6). Functionally, does not exhibit any catalytic activity toward 20:3n-6, but it may enhance FADS2 activity. The polypeptide is Acyl-CoA (8-3)-desaturase (Papio anubis (Olive baboon)).